The sequence spans 1166 residues: Reverse gyrase (1166 aa).

The RG N-terminal-type zinc finger occupies 1-40; sequence MINVMYKNSCPNCGGDISADRLLNGLPCETCLPYINGIDG. Residues cysteine 10, cysteine 13, cysteine 28, and cysteine 31 each contribute to the Zn(2+) site. Residues glutamine 92 and 109-116 each bind ATP; that span reads APTGLGKT. One can recognise a Helicase ATP-binding domain in the interval 96–285; sequence LRRLVSNQSF…ALRLLTGFEP (190 aa). Positions 190-193 match the DEAD box motif; sequence DDAD. The interval 576–1166 is topoisomerase I; sequence FNISTGLLIV…VNPLKSEQNV (591 aa). Positions 580–743 constitute a Toprim domain; sequence TGLLIVESPT…NIYRITYHEI (164 aa). Glutamate 586 serves as a coordination point for Mg(2+). Residues 662–689 form an RG C-terminal-type zinc finger; that stretch reads IKKCLDCNKTFSIASDKCPYCGSTNVQT. The Zn(2+) site is built by cysteine 665, cysteine 668, cysteine 679, and cysteine 682. Residue aspartate 712 participates in Mg(2+) binding. One can recognise a Topo IA-type catalytic domain in the interval 759-1157; that stretch reads NTNLVMSQIV…EIFSEISTLV (399 aa). Residue tyrosine 903 is the O-(5'-phospho-DNA)-tyrosine intermediate of the active site.

In the N-terminal section; belongs to the DEAD box helicase family. DDVD subfamily. The protein in the C-terminal section; belongs to the type IA topoisomerase family. In terms of assembly, monomer. Zn(2+) is required as a cofactor. The cofactor is Mg(2+).

The protein resides in the cytoplasm. It carries out the reaction ATP + H2O = ADP + phosphate + H(+). With respect to regulation, inhibited by UV light-induced lesions; substrate is completely cleaved but a nicked form accumulates, suggesting the reaction is blocked between the cleavage and ligation steps. Inhibited by actinomycin D; substrate DNA remains negatively supercoiled in this case. Activity is stimulated by SSB from S.solfataricus strain P2. Positive supercoiling is inhibited by Sul7d (also called Sso7d) from S.solfataricus strain MT4; SSB from S.solfataricus strain P2 relieves this inhibition. Functionally, modifies the topological state of DNA by introducing positive supercoils in an ATP-dependent process. Increases the linking number in steps of +1. In vitro requires high concentrations to supercoil negatively supercoiled DNA, relaxes plasmid DNA first; DNA single-strand binding protein (SSB) from S.solfataricus strain P2 stimulates positive supercoiling. SSB stimulates DNA-binding by reverse gyrase, and thus all subsequent steps. Binds to single-stranded DNA, transiently cleaves and then rejoins the ends, introducing a positive supercoil in the process. The scissile phosphodiester is attacked by the catalytic tyrosine of the enzyme, resulting in the formation of a DNA-(5'-phosphotyrosyl)-enzyme intermediate. May be involved in DNA damage response. Probably involved in rewinding DNA strands in regions of the chromosome that have opened up to allow replication, transcription, DNA repair and/or for DNA protection. This is Reverse gyrase from Saccharolobus shibatae (strain ATCC 51178 / DSM 5389 / JCM 8931 / NBRC 15437 / B12) (Sulfolobus shibatae).